We begin with the raw amino-acid sequence, 316 residues long: Annexin D5 (316 aa).

Alanine 2 bears the N-acetylalanine mark. Annexin repeat units lie at residues 11-82 (PSPR…LWMP), 83-154 (EAVE…AYLN), 166-238 (ASVE…TILQ), and 242-313 (NSCF…SLLG). The Ca(2+) site is built by phenylalanine 24, glycine 26, glycine 28, and glutamate 68. Phosphoserine is present on serine 95. Threonine 112 is subject to Phosphothreonine. Residue glycine 259 participates in Ca(2+) binding. A Phosphotyrosine modification is found at tyrosine 284. Positions 299 and 300 each coordinate Ca(2+).

The protein belongs to the annexin (TC 1.A.31.1) family. Expressed mainly in roots and flowers. Lower in stems and leaves.

The sequence is that of Annexin D5 (ANN5) from Arabidopsis thaliana (Mouse-ear cress).